Consider the following 472-residue polypeptide: H(+)/Cl(-) exchange transporter ClcA (472 aa).

Over 1–32 (MKAETPSFEAHQFVRVRRGDAVRRLIQRDKTP) the chain is Cytoplasmic. A helical transmembrane segment spans residues 33-69 (LAVLFMAAVVGTLAGLVGVAFEKSVNWVQNQRIGALA). The Periplasmic segment spans residues 70 to 76 (QVADHWY). Residues 77-100 (LVWPLAFILSALLAMVGYFLVRRF) traverse the membrane as a helical segment. The Selectivity filter part_1 motif lies at 106–110 (GSGIP). Ser107 provides a ligand contact to chloride. Positions 109–116 (IPEIEGAL) form an intramembrane region, helical. At 117 to 123 (EELRPVR) the chain is on the cytoplasmic side. Transmembrane regions (helical) follow at residues 124 to 141 (WWRV…TLGA) and 148 to 166 (EGPM…LDVF). A Selectivity filter part_2 motif is present at residues 146-150 (GREGP). The Cytoplasmic segment spans residues 167 to 176 (RMRSPEARHT). Intramembrane regions (helical) lie at residues 177–189 (LLAT…LSAA) and 193–201 (PLAGILFII). Over 202–214 (EEMRPQFRYNLIS) the chain is Cytoplasmic. Residues 215-232 (IKAVFTGVIMSSIVFRIF) traverse the membrane as a helical segment. The Periplasmic portion of the chain corresponds to 233–252 (NGEAAIIEVGKLSNAPVNTL). Residues 253–281 (WLYLVLGMLFGCFGPLFNFLVLRTQDLFQ) form a helical membrane-spanning segment. Over 282-287 (RIHGGN) the chain is Cytoplasmic. The chain crosses the membrane as a helical span at residues 288–309 (IKKWVLIGGLIGGLCGLLGLMQ). Residues 310-329 (PSAVGGGFNLIPIAAAGNFS) lie on the Periplasmic side of the membrane. The next 2 membrane-spanning stretches (helical) occupy residues 330-349 (VGLL…ICFS) and 355-376 (GIFA…MAAI). Residues 355 to 359 (GIFAP) carry the Selectivity filter part_3 motif. Ile356 and Phe357 together coordinate chloride. Residues 377–386 (PLFPAYHLDA) lie on the Periplasmic side of the membrane. The helical intramembrane region spans 387 to 401 (GTFAIAGMGALLAAS). An intramembrane region (note=Loop between two helices) is located at residues 402 to 404 (VRA). The segment at residues 405 to 416 (PLTGIVLVLEMT) is an intramembrane region (helical). Residues 417 to 421 (DNYQL) constitute an intramembrane region (note=Loop between two helices). The helical transmembrane segment at 422 to 438 (ILPMIITCLGATLLAQF) threads the bilayer. The Cytoplasmic portion of the chain corresponds to 439–472 (LGGKPLYSTILQRTLAKQEAEQAAKAQQAPRENT). A chloride-binding site is contributed by Tyr445.

The protein belongs to the chloride channel (TC 2.A.49) family. ClcA subfamily. In terms of assembly, homodimer.

It is found in the cell inner membrane. The catalysed reaction is 2 chloride(in) + H(+)(out) = 2 chloride(out) + H(+)(in). Proton-coupled chloride transporter. Functions as antiport system and exchanges two chloride ions for 1 proton. Probably acts as an electrical shunt for an outwardly-directed proton pump that is linked to amino acid decarboxylation, as part of the extreme acid resistance (XAR) response. The protein is H(+)/Cl(-) exchange transporter ClcA of Klebsiella pneumoniae subsp. pneumoniae (strain ATCC 700721 / MGH 78578).